Here is a 62-residue protein sequence, read N- to C-terminus: Photosystem II reaction center protein Z (62 aa).

A run of 2 helical transmembrane segments spans residues 8–28 (LVSILILLSFALVVGVPVILV) and 41–61 (YASAGLWFGLVIVTAAFNSFV).

Belongs to the PsbZ family. PSII is composed of 1 copy each of membrane proteins PsbA, PsbB, PsbC, PsbD, PsbE, PsbF, PsbH, PsbI, PsbJ, PsbK, PsbL, PsbM, PsbT, PsbX, PsbY, PsbZ, Psb30/Ycf12, at least 3 peripheral proteins of the oxygen-evolving complex and a large number of cofactors. It forms dimeric complexes.

It is found in the plastid. Its subcellular location is the chloroplast thylakoid membrane. In terms of biological role, may control the interaction of photosystem II (PSII) cores with the light-harvesting antenna, regulates electron flow through the 2 photosystem reaction centers. PSII is a light-driven water plastoquinone oxidoreductase, using light energy to abstract electrons from H(2)O, generating a proton gradient subsequently used for ATP formation. The protein is Photosystem II reaction center protein Z of Guillardia theta (Cryptophyte).